The following is a 147-amino-acid chain: Transcriptional repressor NrdR (147 aa).

Residues 3–34 (CPFCGHLETQVVETRVSEDADFVRRRRQCSAC) fold into a zinc finger. The ATP-cone domain maps to 49–139 (PVVVKKDGSR…VYRSFEDVDE (91 aa)).

It belongs to the NrdR family. The cofactor is Zn(2+).

Its function is as follows. Negatively regulates transcription of bacterial ribonucleotide reductase nrd genes and operons by binding to NrdR-boxes. The sequence is that of Transcriptional repressor NrdR from Variovorax paradoxus (strain S110).